We begin with the raw amino-acid sequence, 108 residues long: Small proline-rich protein 2H (108 aa).

Low complexity predominate over residues 1–11 (MSYQQQQCKQP). The disordered stretch occupies residues 1-22 (MSYQQQQCKQPCQPPPVCPPPQ). Residues 12 to 22 (CQPPPVCPPPQ) are compositionally biased toward pro residues. 7 repeat units span residues 21–29 (PQCPEPCPP), 30–38 (PKCPEPCPP), 39–47 (PKCTEPCPP), 48–56 (PKCPEPCPP), 57–65 (PKCPEPCPP), 66–74 (PKCPEPCPP), and 75–83 (PKCTEPCPP). The segment at 21–83 (PQCPEPCPPP…PPKCTEPCPP (63 aa)) is 7 X 9 AA tandem repeats of P-[KQ]-C-[PT]-E-P-C-P-P. Positions 83–108 (PPSYQQKCPSVQPSPPCQQKCPPKNK) are disordered. A compositionally biased stretch (low complexity) spans 87 to 108 (QQKCPSVQPSPPCQQKCPPKNK).

Belongs to the cornifin (SPRR) family. In terms of tissue distribution, expressed weakly in uterus.

It is found in the cytoplasm. Cross-linked envelope protein of keratinocytes. It is a keratinocyte protein that first appears in the cell cytosol, but ultimately becomes cross-linked to membrane proteins by transglutaminase. All that results in the formation of an insoluble envelope beneath the plasma membrane. This is Small proline-rich protein 2H (Sprr2h) from Mus musculus (Mouse).